The sequence spans 302 residues: Protoheme IX farnesyltransferase (302 aa).

Transmembrane regions (helical) follow at residues 28–48, 50–70, 95–115, 122–142, 150–170, 176–196, 221–241, 243–263, and 282–302; these read VVAL…PGVP, WSVL…AAVV, IAPL…MVVL, LTAW…TLFL, IVIG…AVTG, ALLL…ALAI, LHIL…FVTG, SGGI…QYAV, and ITYL…FVPA.

This sequence belongs to the UbiA prenyltransferase family. Protoheme IX farnesyltransferase subfamily.

The protein localises to the cell inner membrane. The catalysed reaction is heme b + (2E,6E)-farnesyl diphosphate + H2O = Fe(II)-heme o + diphosphate. The protein operates within porphyrin-containing compound metabolism; heme O biosynthesis; heme O from protoheme: step 1/1. Its function is as follows. Converts heme B (protoheme IX) to heme O by substitution of the vinyl group on carbon 2 of heme B porphyrin ring with a hydroxyethyl farnesyl side group. The protein is Protoheme IX farnesyltransferase of Marinobacter nauticus (strain ATCC 700491 / DSM 11845 / VT8) (Marinobacter aquaeolei).